The sequence spans 33 residues: uncharacterized protein (33 aa).

The disordered stretch occupies residues 1 to 33 (MQPGTGLSFDISQILKQGSDPKQKLPERQAIVL).

This is an uncharacterized protein from Caenorhabditis elegans.